The following is a 249-amino-acid chain: Ubiquinone biosynthesis O-methyltransferase (249 aa).

Positions Met1–Asp21 are disordered. Residues Arg52, Gly72, Asp93, and Met137 each coordinate S-adenosyl-L-methionine.

Belongs to the methyltransferase superfamily. UbiG/COQ3 family.

It carries out the reaction a 3-demethylubiquinol + S-adenosyl-L-methionine = a ubiquinol + S-adenosyl-L-homocysteine + H(+). The enzyme catalyses a 3-(all-trans-polyprenyl)benzene-1,2-diol + S-adenosyl-L-methionine = a 2-methoxy-6-(all-trans-polyprenyl)phenol + S-adenosyl-L-homocysteine + H(+). It participates in cofactor biosynthesis; ubiquinone biosynthesis. In terms of biological role, O-methyltransferase that catalyzes the 2 O-methylation steps in the ubiquinone biosynthetic pathway. This is Ubiquinone biosynthesis O-methyltransferase from Sodalis glossinidius (strain morsitans).